A 95-amino-acid polypeptide reads, in one-letter code: Aspartyl/glutamyl-tRNA(Asn/Gln) amidotransferase subunit C (95 aa).

It belongs to the GatC family. In terms of assembly, heterotrimer of A, B and C subunits.

It carries out the reaction L-glutamyl-tRNA(Gln) + L-glutamine + ATP + H2O = L-glutaminyl-tRNA(Gln) + L-glutamate + ADP + phosphate + H(+). The enzyme catalyses L-aspartyl-tRNA(Asn) + L-glutamine + ATP + H2O = L-asparaginyl-tRNA(Asn) + L-glutamate + ADP + phosphate + 2 H(+). Allows the formation of correctly charged Asn-tRNA(Asn) or Gln-tRNA(Gln) through the transamidation of misacylated Asp-tRNA(Asn) or Glu-tRNA(Gln) in organisms which lack either or both of asparaginyl-tRNA or glutaminyl-tRNA synthetases. The reaction takes place in the presence of glutamine and ATP through an activated phospho-Asp-tRNA(Asn) or phospho-Glu-tRNA(Gln). In Chlorobaculum tepidum (strain ATCC 49652 / DSM 12025 / NBRC 103806 / TLS) (Chlorobium tepidum), this protein is Aspartyl/glutamyl-tRNA(Asn/Gln) amidotransferase subunit C.